A 279-amino-acid chain; its full sequence is Homeobox protein BarH-like 2 (279 aa).

Disordered stretches follow at residues 110–137 (APGG…RRSR) and 194–279 (KGGQ…PPLS). A compositionally biased stretch (polar residues) spans 118-128 (SSESETEQPTP). Residues 133–192 (PRRSRTIFTELQLMGLEKKFQKQKYLSTPDRLDLAQSLGLTQLQVKTWYQNRRMKWKKMV) constitute a DNA-binding region (homeobox). Polar residues predominate over residues 225–240 (NSQAQGQEQLEPSQGQ). The span at 261-279 (PPDPPQELPIPSSEPPPLS) shows a compositional bias: pro residues.

The protein belongs to the BAR homeobox family. As to expression, highly expressed in adult salivary gland and at much lower levels in mammary gland, kidney and placenta.

Its subcellular location is the nucleus. In terms of biological role, transcription factor. Binds optimally to the DNA consensus sequence 5'-YYTAATGRTTTTY-3'. May control the expression of neural adhesion molecules such as L1 or Ng-CAM during embryonic development of both the central and peripherical nervous system. May be involved in controlling adhesive processes in keratinizing epithelia. In Homo sapiens (Human), this protein is Homeobox protein BarH-like 2 (BARX2).